The primary structure comprises 209 residues: MIRFITIPDFADYQVILKLMEDYVNKVISDHEPEIIYLVEHSEVYTAGTNYKQEELLNYGDIPVIYTGRGGKFTFHGPGQRVIYPILNLDSPNRHKDLKLYIKMLEEWIINSLNYFGIKAYIIKDKVGIWVKVRKDEFAKIAAIGVRVRKWVTYHGVAINISTDLSKFSGIIPCGLEDSLVTSLNQLGIHVEMSEFDKIIQTEFNKIFK.

One can recognise a BPL/LPL catalytic domain in the interval Asp-30–Lys-209. Substrate contacts are provided by residues Arg-69–His-76, Ala-143–Gly-145, and Gly-156–Ala-158. The Acyl-thioester intermediate role is filled by Cys-174.

This sequence belongs to the LipB family.

The protein resides in the cytoplasm. It catalyses the reaction octanoyl-[ACP] + L-lysyl-[protein] = N(6)-octanoyl-L-lysyl-[protein] + holo-[ACP] + H(+). It participates in protein modification; protein lipoylation via endogenous pathway; protein N(6)-(lipoyl)lysine from octanoyl-[acyl-carrier-protein]: step 1/2. In terms of biological role, catalyzes the transfer of endogenously produced octanoic acid from octanoyl-acyl-carrier-protein onto the lipoyl domains of lipoate-dependent enzymes. Lipoyl-ACP can also act as a substrate although octanoyl-ACP is likely to be the physiological substrate. This chain is Octanoyltransferase, found in Rickettsia peacockii (strain Rustic).